The following is a 274-amino-acid chain: Proteasome subunit beta type-7-B (274 aa).

The propeptide at 1–37 (MSQSSVDIPPKGGFSFDLCKRNDMLTQKGLKAPSFLK) is removed in mature form. T40 (nucleophile) is an active-site residue.

It belongs to the peptidase T1B family. Component of the 20S core complex of the 26S proteasome. The 26S proteasome is composed of a core protease (CP), known as the 20S proteasome, capped at one or both ends by the 19S regulatory particle (RP/PA700). The 20S proteasome core is composed of 28 subunits that are arranged in four stacked rings, resulting in a barrel-shaped structure. The two end rings are each formed by seven alpha subunits, and the two central rings are each formed by seven beta subunits. The catalytic chamber with the active sites is on the inside of the barrel.

The protein resides in the cytoplasm. It is found in the nucleus. The catalysed reaction is Cleavage of peptide bonds with very broad specificity.. Functionally, the proteasome is a multicatalytic proteinase complex which is characterized by its ability to cleave peptides with Arg, Phe, Tyr, Leu, and Glu adjacent to the leaving group at neutral or slightly basic pH. The proteasome has an ATP-dependent proteolytic activity. The sequence is that of Proteasome subunit beta type-7-B (PBB2) from Arabidopsis thaliana (Mouse-ear cress).